Reading from the N-terminus, the 156-residue chain is Arginine repressor (156 aa).

This sequence belongs to the ArgR family.

The protein localises to the cytoplasm. It participates in amino-acid biosynthesis; L-arginine biosynthesis [regulation]. Its function is as follows. Regulates arginine biosynthesis genes. This Shewanella frigidimarina (strain NCIMB 400) protein is Arginine repressor.